Reading from the N-terminus, the 106-residue chain is Small ribosomal subunit protein uS17 (106 aa).

It belongs to the universal ribosomal protein uS17 family. As to quaternary structure, part of the 30S ribosomal subunit.

Functionally, one of the primary rRNA binding proteins, it binds specifically to the 5'-end of 16S ribosomal RNA. The chain is Small ribosomal subunit protein uS17 from Methanosphaera stadtmanae (strain ATCC 43021 / DSM 3091 / JCM 11832 / MCB-3).